Here is a 390-residue protein sequence, read N- to C-terminus: Carbamoyl phosphate synthase small chain (390 aa).

The interval 1–198 (MTSTPTPTPT…LGEGYAVGPE (198 aa)) is CPSase. The L-glutamine site is built by Ser53, Gly250, and Gly252. One can recognise a Glutamine amidotransferase type-1 domain in the interval 202-390 (RVVVLDYGVK…VGELKGRVEA (189 aa)). The active-site Nucleophile is Cys279. Residues Leu280, Gln283, Asn321, Gly323, and Phe324 each coordinate L-glutamine. Active-site residues include His363 and Glu365.

This sequence belongs to the CarA family. In terms of assembly, composed of two chains; the small (or glutamine) chain promotes the hydrolysis of glutamine to ammonia, which is used by the large (or ammonia) chain to synthesize carbamoyl phosphate. Tetramer of heterodimers (alpha,beta)4.

It catalyses the reaction hydrogencarbonate + L-glutamine + 2 ATP + H2O = carbamoyl phosphate + L-glutamate + 2 ADP + phosphate + 2 H(+). The catalysed reaction is L-glutamine + H2O = L-glutamate + NH4(+). Its pathway is amino-acid biosynthesis; L-arginine biosynthesis; carbamoyl phosphate from bicarbonate: step 1/1. It participates in pyrimidine metabolism; UMP biosynthesis via de novo pathway; (S)-dihydroorotate from bicarbonate: step 1/3. Its function is as follows. Small subunit of the glutamine-dependent carbamoyl phosphate synthetase (CPSase). CPSase catalyzes the formation of carbamoyl phosphate from the ammonia moiety of glutamine, carbonate, and phosphate donated by ATP, constituting the first step of 2 biosynthetic pathways, one leading to arginine and/or urea and the other to pyrimidine nucleotides. The small subunit (glutamine amidotransferase) binds and cleaves glutamine to supply the large subunit with the substrate ammonia. This is Carbamoyl phosphate synthase small chain from Maricaulis maris (strain MCS10) (Caulobacter maris).